The chain runs to 312 residues: Olfactory receptor 51A7 (312 aa).

Over 1–25 the chain is Extracellular; sequence MSVLNNSEVKLFLLIGIPGLEHAHI. Residue Asn-5 is glycosylated (N-linked (GlcNAc...) asparagine). A helical membrane pass occupies residues 26-46; sequence WFSIPICLMYLLAIMGNCTIL. Topologically, residues 47–54 are cytoplasmic; it reads FIIKTEPS. Residues 55–75 form a helical membrane-spanning segment; the sequence is LHEPMYYFLAMLAVSDMGLSL. The Extracellular portion of the chain corresponds to 76–99; the sequence is SSLPTMLRVFLFNAMGISPNACFA. Cysteines 97 and 189 form a disulfide. The chain crosses the membrane as a helical span at residues 100–120; it reads QEFFIHGFTVMESSVLLIMSL. The Cytoplasmic segment spans residues 121 to 139; the sequence is DRFLAIHNPLRYSSILTSN. A helical transmembrane segment spans residues 140–160; it reads RVAKMGLILAIRSILLVIPFP. The Extracellular segment spans residues 161–196; that stretch reads FTLRRLKYCQKNLLSHSYCLHQDTMKLACSDNKTNV. A glycan (N-linked (GlcNAc...) asparagine) is linked at Asn-192. A helical membrane pass occupies residues 197–216; the sequence is IYGFFIALCTMLDLALIVLS. The Cytoplasmic portion of the chain corresponds to 217-236; the sequence is YVLILKTILSIASLAERLKA. The chain crosses the membrane as a helical span at residues 237-257; that stretch reads LNTCVSHICAVLTFYVPIITL. The Extracellular segment spans residues 258–272; sequence AAMHHFAKHKSPLVV. The helical transmembrane segment at 273-293 threads the bilayer; that stretch reads ILIADMFLLVPPLMNPIVYCV. Over 294 to 312 the chain is Cytoplasmic; that stretch reads KTRQIWEKILGKLLNVCGR.

The protein belongs to the G-protein coupled receptor 1 family.

It is found in the cell membrane. Odorant receptor. This Homo sapiens (Human) protein is Olfactory receptor 51A7 (OR51A7).